Reading from the N-terminus, the 182-residue chain is Large ribosomal subunit protein eL15 (182 aa).

Belongs to the eukaryotic ribosomal protein eL15 family.

This is Large ribosomal subunit protein eL15 (rpl15e) from Methanothermobacter thermautotrophicus (strain ATCC 29096 / DSM 1053 / JCM 10044 / NBRC 100330 / Delta H) (Methanobacterium thermoautotrophicum).